Reading from the N-terminus, the 184-residue chain is Oligoribonuclease (184 aa).

The Exonuclease domain occupies 8–171 (LIWIDLEMTG…EDIRESVVEL (164 aa)). Tyr129 is a catalytic residue.

The protein belongs to the oligoribonuclease family.

The protein localises to the cytoplasm. In terms of biological role, 3'-to-5' exoribonuclease specific for small oligoribonucleotides. The sequence is that of Oligoribonuclease from Buchnera aphidicola subsp. Acyrthosiphon pisum (strain APS) (Acyrthosiphon pisum symbiotic bacterium).